We begin with the raw amino-acid sequence, 664 residues long: Pentatricopeptide repeat-containing protein At1g10910, chloroplastic (664 aa).

Residues Met1–Arg72 constitute a chloroplast transit peptide. 9 PPR repeats span residues Asn165–Pro199, Asp200–Met235, Asp236–Pro270, Asn271–Pro305, Asn306–Glu340, Asn341–Ser375, Asp376–Thr406, Asp411–Pro445, and Asp446–Leu480.

Belongs to the PPR family. P subfamily.

Its subcellular location is the plastid. It is found in the chloroplast. This Arabidopsis thaliana (Mouse-ear cress) protein is Pentatricopeptide repeat-containing protein At1g10910, chloroplastic.